Reading from the N-terminus, the 662-residue chain is MKDPAVEIEKLREQLHHHEHLYYVLDKPEITDAEYDALMHRLQELETKHPDLLTPDSPTQRVGGKPREGFIKVRHSSPMLSLDNALNEAELRDFDRRVRDLLGGAAFRYVTELKMDGLSMAAHYNNGKFTEAVTRGDGTTGEDVTENARTIRSLPLRVKTKLPAFEVRGETVMSRRAFERLNTDRDEKGLSRFANPRNAAAGSLRQLEPQVTASRRLEYYTYFLLTEGRPAYESHWEALTALKQMGFKVNDKSRPCDSIDEVLAFCAHWEGERENLPYEIDGVVVKVDSVEQQRRLGFTAKAPRWAIAYKYPARQATTMIEGIDVQVGRTGALTPVANLKPVVVGGVTVSRATLHNEDEIERLGLQIGDEVVVERSGDVIPKVVRVSSQGSYRKPFKMPSHCPVCNTKIVREEGEAASRCINANCPARLKESILHFASRGVMNIDGMGDALVDQLVDREIVHNIADLYDLKIEDLMDLDRMGVKSAGNVIRNIDKSRRNSLPRVLTALGIRFVGERTAVFLAQAFGSMDAIERATVDELQQAEEVGPKVAEAVVQFFSIPDNRELVDRLRKADLQFTYAYSRPKGGPLTGSTFVLTGTLPNLSREEAKQLIEQAGGKVASAVSKKTSYVVAGEDAGSKLDKAHQLNIRVITEAELHAMLRGE.

NAD(+)-binding positions include 32-36 (DAEYD), 81-82 (SL), and glutamate 112. Lysine 114 serves as the catalytic N6-AMP-lysine intermediate. NAD(+) contacts are provided by arginine 135, glutamate 170, lysine 286, and lysine 310. Zn(2+)-binding residues include cysteine 402, cysteine 405, cysteine 420, and cysteine 425. Residues 583–662 (PKGGPLTGST…AELHAMLRGE (80 aa)) form the BRCT domain.

This sequence belongs to the NAD-dependent DNA ligase family. LigA subfamily. Requires Mg(2+) as cofactor. Mn(2+) is required as a cofactor.

The enzyme catalyses NAD(+) + (deoxyribonucleotide)n-3'-hydroxyl + 5'-phospho-(deoxyribonucleotide)m = (deoxyribonucleotide)n+m + AMP + beta-nicotinamide D-nucleotide.. In terms of biological role, DNA ligase that catalyzes the formation of phosphodiester linkages between 5'-phosphoryl and 3'-hydroxyl groups in double-stranded DNA using NAD as a coenzyme and as the energy source for the reaction. It is essential for DNA replication and repair of damaged DNA. The chain is DNA ligase from Solibacter usitatus (strain Ellin6076).